Here is a 165-residue protein sequence, read N- to C-terminus: Ribosome maturation factor RimM (165 aa).

Positions 92–163 (EARHYWADLE…RVVVDPPEGL (72 aa)) constitute a PRC barrel domain.

It belongs to the RimM family. Binds ribosomal protein uS19.

It localises to the cytoplasm. In terms of biological role, an accessory protein needed during the final step in the assembly of 30S ribosomal subunit, possibly for assembly of the head region. Essential for efficient processing of 16S rRNA. May be needed both before and after RbfA during the maturation of 16S rRNA. It has affinity for free ribosomal 30S subunits but not for 70S ribosomes. The polypeptide is Ribosome maturation factor RimM (Anaeromyxobacter sp. (strain Fw109-5)).